The sequence spans 137 residues: MTLNLRVLSPNRVIWDSEVQEIIISTNSGQMGVLPNHVSLVTAVDIGVMKIRLNGKWSTMALMGGFAKIDKDRITILVNNAERDVDIDLQKAQETFRRAKACLVQAEGKRQVIEADVALKRARTLLEAINASPSDSN.

It belongs to the ATPase epsilon chain family. In terms of assembly, F-type ATPases have 2 components, CF(1) - the catalytic core - and CF(0) - the membrane proton channel. CF(1) has five subunits: alpha(3), beta(3), gamma(1), delta(1), epsilon(1). CF(0) has three main subunits: a, b and c.

It is found in the plastid. It localises to the chloroplast thylakoid membrane. Its function is as follows. Produces ATP from ADP in the presence of a proton gradient across the membrane. The polypeptide is ATP synthase epsilon chain, chloroplastic (Pinus koraiensis (Korean pine)).